The following is a 69-amino-acid chain: VLIIAVLFLTACQLTTAETYSRGRQKHRARRSTDKNSKWTRECTRSGGACNSHDQCCANFCRKATSTCM.

Residues 1–17 (VLIIAVLFLTACQLTTA) form the signal peptide. Residues 18–41 (ETYSRGRQKHRARRSTDKNSKWTR) constitute a propeptide that is removed on maturation. 3 cysteine pairs are disulfide-bonded: C43–C57, C50–C61, and C56–C68.

The protein belongs to the conotoxin O1 superfamily. As to expression, expressed by the venom duct.

It is found in the secreted. The protein is Conotoxin Eb6.19 (E1) of Conus ebraeus (Hebrew cone).